Consider the following 264-residue polypeptide: tRNA (guanine-N(1)-)-methyltransferase (264 aa).

Residues Gly-125 and 145–150 each bind S-adenosyl-L-methionine; that span reads LGDFVL.

The protein belongs to the RNA methyltransferase TrmD family. Homodimer.

It is found in the cytoplasm. It carries out the reaction guanosine(37) in tRNA + S-adenosyl-L-methionine = N(1)-methylguanosine(37) in tRNA + S-adenosyl-L-homocysteine + H(+). Functionally, specifically methylates guanosine-37 in various tRNAs. The chain is tRNA (guanine-N(1)-)-methyltransferase from Burkholderia cenocepacia (strain HI2424).